Here is a 302-residue protein sequence, read N- to C-terminus: tRNA dimethylallyltransferase (302 aa).

An ATP-binding site is contributed by 10–17 (GPTAIGKT). 12–17 (TAIGKT) lines the substrate pocket. Residues 35 to 38 (DSRQ) form an interaction with substrate tRNA region.

Belongs to the IPP transferase family. Monomer. Requires Mg(2+) as cofactor.

The enzyme catalyses adenosine(37) in tRNA + dimethylallyl diphosphate = N(6)-dimethylallyladenosine(37) in tRNA + diphosphate. Its function is as follows. Catalyzes the transfer of a dimethylallyl group onto the adenine at position 37 in tRNAs that read codons beginning with uridine, leading to the formation of N6-(dimethylallyl)adenosine (i(6)A). This is tRNA dimethylallyltransferase from Christiangramia forsetii (strain DSM 17595 / CGMCC 1.15422 / KT0803) (Gramella forsetii).